We begin with the raw amino-acid sequence, 513 residues long: Histidine ammonia-lyase (513 aa).

Residues 142–144 (ASG) constitute a cross-link (5-imidazolinone (Ala-Gly)). S143 carries the post-translational modification 2,3-didehydroalanine (Ser).

The protein belongs to the PAL/histidase family. Contains an active site 4-methylidene-imidazol-5-one (MIO), which is formed autocatalytically by cyclization and dehydration of residues Ala-Ser-Gly.

The protein localises to the cytoplasm. The catalysed reaction is L-histidine = trans-urocanate + NH4(+). It participates in amino-acid degradation; L-histidine degradation into L-glutamate; N-formimidoyl-L-glutamate from L-histidine: step 1/3. This is Histidine ammonia-lyase from Hyphomonas neptunium (strain ATCC 15444).